We begin with the raw amino-acid sequence, 123 residues long: Histone H2B (123 aa).

The disordered stretch occupies residues 1–32 (MPPKAASKGAKKAASKAKAARSTDKKKRRRRR). Over residues 9–32 (GAKKAASKAKAARSTDKKKRRRRR) the composition is skewed to basic residues. Serine 110 carries an O-linked (GlcNAc) serine glycan. Lysine 118 participates in a covalent cross-link: Glycyl lysine isopeptide (Lys-Gly) (interchain with G-Cter in ubiquitin).

It belongs to the histone H2B family. The nucleosome is a histone octamer containing two molecules each of H2A, H2B, H3 and H4 assembled in one H3-H4 heterotetramer and two H2A-H2B heterodimers. The octamer wraps approximately 147 bp of DNA. Monoubiquitination of Lys-118 gives a specific tag for epigenetic transcriptional activation and is also prerequisite for histone H3 'Lys-4' and 'Lys-79' methylation.

It is found in the nucleus. The protein resides in the chromosome. In terms of biological role, core component of nucleosome. Nucleosomes wrap and compact DNA into chromatin, limiting DNA accessibility to the cellular machineries which require DNA as a template. Histones thereby play a central role in transcription regulation, DNA repair, DNA replication and chromosomal stability. DNA accessibility is regulated via a complex set of post-translational modifications of histones, also called histone code, and nucleosome remodeling. This is Histone H2B from Urechis caupo (Innkeeper worm).